A 134-amino-acid polypeptide reads, in one-letter code: Ribosome-binding factor A (134 aa).

The protein belongs to the RbfA family. Monomer. Binds 30S ribosomal subunits, but not 50S ribosomal subunits or 70S ribosomes.

It localises to the cytoplasm. In terms of biological role, one of several proteins that assist in the late maturation steps of the functional core of the 30S ribosomal subunit. Associates with free 30S ribosomal subunits (but not with 30S subunits that are part of 70S ribosomes or polysomes). Required for efficient processing of 16S rRNA. May interact with the 5'-terminal helix region of 16S rRNA. The polypeptide is Ribosome-binding factor A (Rhizobium johnstonii (strain DSM 114642 / LMG 32736 / 3841) (Rhizobium leguminosarum bv. viciae)).